The primary structure comprises 362 residues: 3-dehydroquinate synthase (362 aa).

NAD(+) is bound by residues 70–75 (DGEKYK), 104–108 (GVIGD), 128–129 (TT), K141, and K150. Residues E183, H246, and H263 each coordinate Zn(2+).

It belongs to the sugar phosphate cyclases superfamily. Dehydroquinate synthase family. Co(2+) is required as a cofactor. It depends on Zn(2+) as a cofactor. The cofactor is NAD(+).

Its subcellular location is the cytoplasm. It catalyses the reaction 7-phospho-2-dehydro-3-deoxy-D-arabino-heptonate = 3-dehydroquinate + phosphate. The protein operates within metabolic intermediate biosynthesis; chorismate biosynthesis; chorismate from D-erythrose 4-phosphate and phosphoenolpyruvate: step 2/7. Functionally, catalyzes the conversion of 3-deoxy-D-arabino-heptulosonate 7-phosphate (DAHP) to dehydroquinate (DHQ). In Acinetobacter baylyi (strain ATCC 33305 / BD413 / ADP1), this protein is 3-dehydroquinate synthase.